The sequence spans 174 residues: Large ribosomal subunit protein uL6 (174 aa).

Belongs to the universal ribosomal protein uL6 family. In terms of assembly, part of the 50S ribosomal subunit.

This protein binds to the 23S rRNA, and is important in its secondary structure. It is located near the subunit interface in the base of the L7/L12 stalk, and near the tRNA binding site of the peptidyltransferase center. This is Large ribosomal subunit protein uL6 from Acidithiobacillus ferrooxidans (strain ATCC 23270 / DSM 14882 / CIP 104768 / NCIMB 8455) (Ferrobacillus ferrooxidans (strain ATCC 23270)).